The following is a 90-amino-acid chain: Small ribosomal subunit protein bS20 (90 aa).

The protein belongs to the bacterial ribosomal protein bS20 family.

Functionally, binds directly to 16S ribosomal RNA. This chain is Small ribosomal subunit protein bS20, found in Roseiflexus sp. (strain RS-1).